The following is a 290-amino-acid chain: MGPDSTLALGEGAVRGRLELGVCLRGGRSVASRQFHEGALRVLRPHYLDESGQVGYVMVNPGGAYLGADLFLIDVTVENNAALLLTTQSATKVYRTPGSFAEQRMSVRLGEGSRLELMPDQLIAYREASYRQNSRISLHPTSSLIMAEVITPGWSPDGASFKYQEVRLRNEIWIDDENGAKLLALDNLLIRPPLGDVTGMGFMEGFSHLGSLVVVDPRVNQGLADELDLIARDFDAYTGMSLTATIAGSTGLVLRSLSNSTEELNNLLGACAGVLRERWYGQAPLNLRKY.

Belongs to the UreD family. In terms of assembly, ureD, UreF and UreG form a complex that acts as a GTP-hydrolysis-dependent molecular chaperone, activating the urease apoprotein by helping to assemble the nickel containing metallocenter of UreC. The UreE protein probably delivers the nickel.

The protein resides in the cytoplasm. Its function is as follows. Required for maturation of urease via the functional incorporation of the urease nickel metallocenter. This Paenarthrobacter aurescens (strain TC1) protein is Urease accessory protein UreD.